We begin with the raw amino-acid sequence, 237 residues long: NAD-dependent protein deacetylase (237 aa).

A Deacetylase sirtuin-type domain is found at 1-237 (MLTTWLTEAK…LEETNRALQA (237 aa)). Ala-18, Thr-22, Phe-29, Arg-30, Gln-95, Asp-98, and His-113 together coordinate NAD(+). Residue Phe-29 coordinates nicotinamide. Residue Asp-98 coordinates nicotinamide. His-113 functions as the Proton acceptor in the catalytic mechanism. Zn(2+)-binding residues include Cys-121, Cys-124, Cys-140, and Cys-142. Positions 180, 181, 205, and 224 each coordinate NAD(+).

This sequence belongs to the sirtuin family. Class U subfamily. Requires Zn(2+) as cofactor.

The protein localises to the cytoplasm. The enzyme catalyses N(6)-acetyl-L-lysyl-[protein] + NAD(+) + H2O = 2''-O-acetyl-ADP-D-ribose + nicotinamide + L-lysyl-[protein]. In terms of biological role, NAD-dependent protein deacetylase which modulates the activities of several enzymes which are inactive in their acetylated form. This is NAD-dependent protein deacetylase from Halalkalibacterium halodurans (strain ATCC BAA-125 / DSM 18197 / FERM 7344 / JCM 9153 / C-125) (Bacillus halodurans).